The primary structure comprises 301 residues: MVVTVRAPATSANLGSGFDVFGVALSKPADVVRVERADTTTITVTGAGAQYVPTDPQENTAGVVAAALDAPATIHINKGVRPSSGLGSSAASAAAATVALAELYDRPLDDDALVRAAAQGEAAASGVAHADNVAPAILGGFTIVREDGIEHVDASLALAVCLPETTVSTRDARGVVPESAAMEAVVSTVESAATLTLGMCENDPQRVGRGVEDALVTPARARLMDGYEAASAAARDAGATGVTISGSGPGVVAVCRRRDRKRVAAALVDGFDSAGVAASAYQTRIGDGATRLAADGDDRAP.

81–91 serves as a coordination point for ATP; it reads RPSSGLGSSAA.

It belongs to the GHMP kinase family. Homoserine kinase subfamily.

Its subcellular location is the cytoplasm. The catalysed reaction is L-homoserine + ATP = O-phospho-L-homoserine + ADP + H(+). Its pathway is amino-acid biosynthesis; L-threonine biosynthesis; L-threonine from L-aspartate: step 4/5. Catalyzes the ATP-dependent phosphorylation of L-homoserine to L-homoserine phosphate. This is Homoserine kinase from Halobacterium salinarum (strain ATCC 29341 / DSM 671 / R1).